We begin with the raw amino-acid sequence, 448 residues long: MGKYFGTDGVRGVANKELTPELAFKIGRFGGYVLTKDTNRPKVIIGRDTRVSGHMLEGALVAGLLSIGAEVMRLGVISTPGVAYLTKALDAQAGVMISASHNPVQDNGIKFFGADGFKLTDEQEAEIEALLDKEVDELPRPIGTNLGQVNDYFEGGQKYLQYIKQTVEEDFSGLHIALDCAHGATSSLAPYLFADLEADISTMGTSPNGMNINDGVGSTHPEGLAELVKEKGADIGLAFDGDGDRLIAVDEKGNIVDGDQIMYICAKYMKETGQLKHNTVVSTVMSNLGFYKALEANGITSDKTAVGDRYVMEEMKRGGYNLGGEQSGHIIMLDYITTGDGMLSALQLVNIMKVTKKPLSELASEMKKFPQLLVNVRVTDKKLALENEKIKEIIRVVEEEMNGDGRVLVRPSGTEPLIRVMAEAPTQELCNEYVHRIVDVVKAEVGAE.

The Phosphoserine intermediate role is filled by Ser-100. Positions 100, 240, 242, and 244 each coordinate Mg(2+). Ser-100 bears the Phosphoserine mark.

The protein belongs to the phosphohexose mutase family. The cofactor is Mg(2+). Post-translationally, activated by phosphorylation.

The enzyme catalyses alpha-D-glucosamine 1-phosphate = D-glucosamine 6-phosphate. Catalyzes the conversion of glucosamine-6-phosphate to glucosamine-1-phosphate. The chain is Phosphoglucosamine mutase from Bacillus cytotoxicus (strain DSM 22905 / CIP 110041 / 391-98 / NVH 391-98).